A 374-amino-acid chain; its full sequence is MTTYVWSYLLEYERERADILDAVQKVFASGSLILGQSVENFETEYARYHGIAHCVGVDNGTNAVKLALESVGVGRDDEVVTVSNTAAPTVLAIDEIGARPVFVDVRDEDYLMDTDLVEAAVTPRTKAIVPVHLYGQCVDMTALRELADRRGLKLVEDCAQAHGARRDGRLAGTMSDAAAFSFYPTKVLGAYGDGGAVVTNDDETARALRRLRYYGMEEVYYVTRTPGHNSRLDEVQAEILRRKLTRLDAYVAGRRAVAQRYVDGLADLQDSHGLELPVVTDGNEHVFYVYVVRHPRRDEIIKRLRDGYDISLNISYPWPVHTMTGFAHLGVASGSLPVTERLAGEIFSLPMYPSLPHDLQDRVIEAVREVITGL.

Pyridoxal 5'-phosphate is bound by residues G60, Q160, 181–186 (SFYPTK), Y214, Y221, 229–231 (NSR), and Y316. The residue at position 186 (K186) is an N6-(pyridoxal phosphate)lysine.

It belongs to the degT/dnrJ/eryC1 family. Pyridoxal 5'-phosphate is required as a cofactor.

It catalyses the reaction dTDP-3-amino-3,4,6-trideoxy-alpha-D-glucose + 2-oxoglutarate = dTDP-3-dehydro-4,6-dideoxy-alpha-D-glucose + L-glutamate. It participates in antibiotic biosynthesis. Its function is as follows. Involved in the biosynthesis of the amino sugar dTDP-L-megosamine which is found in the macrolide antibiotic and antiparasitic megalomicin A. Catalyzes the reversible transfer of the amino group from L-glutamate to the C-3 position of dTDP-3-keto-4,6-deoxyglucose to yield dTDP-3-amino-3,4,6-trideoxyglucose. In Micromonospora megalomicea subsp. nigra, this protein is dTDP-3-amino-3,4,6-trideoxy-alpha-D-glucose transaminase.